The following is a 317-amino-acid chain: Methionyl-tRNA formyltransferase (317 aa).

112–115 contacts (6S)-5,6,7,8-tetrahydrofolate; the sequence is SLLP.

The protein belongs to the Fmt family.

It carries out the reaction L-methionyl-tRNA(fMet) + (6R)-10-formyltetrahydrofolate = N-formyl-L-methionyl-tRNA(fMet) + (6S)-5,6,7,8-tetrahydrofolate + H(+). In terms of biological role, attaches a formyl group to the free amino group of methionyl-tRNA(fMet). The formyl group appears to play a dual role in the initiator identity of N-formylmethionyl-tRNA by promoting its recognition by IF2 and preventing the misappropriation of this tRNA by the elongation apparatus. The chain is Methionyl-tRNA formyltransferase from Geobacter sulfurreducens (strain ATCC 51573 / DSM 12127 / PCA).